The chain runs to 340 residues: MFYKLAQKVMFQMDPEKAHHFALNSLMATANTPLDCFYAQKIAPSPVEFMGVTFPNPVGLAAGMDKDGECIDGFHAMGFGHIEVGTVTPRPQPGNDLPRLFRLKPAKGIINRMGFNNKGVDNLIANLKAAKSGALIGVNIGKNKDTPVEQGKDDYLICMDKVYEYAAYIAVNISSPNTPGLRSLQYGDLLDDLLGSLKAKQKDLAQKHGKYVPIALKIAPDLSDEEIQKIADSLIKNQFDGAIATNTTLSRDGVSGLMNANETGGLSGKPLNLLSTSVIKKLSSCLNGQIPIIGVGGINSAADAIDKLDAGASMVQIYSGFIYQGPKLIKDIIEACRVRK.

FMN is bound by residues 62–66 (AGMDK) and T86. Substrate is bound at residue K66. 111–115 (NRMGF) is a substrate binding site. N139 and N172 together coordinate FMN. N172 is a substrate binding site. S175 (nucleophile) is an active-site residue. N177 is a substrate binding site. K217 and T245 together coordinate FMN. 246–247 (NT) serves as a coordination point for substrate. Residues G268, G297, and 318–319 (YS) contribute to the FMN site.

The protein belongs to the dihydroorotate dehydrogenase family. Type 2 subfamily. Monomer. FMN is required as a cofactor.

The protein localises to the cell membrane. It carries out the reaction (S)-dihydroorotate + a quinone = orotate + a quinol. It participates in pyrimidine metabolism; UMP biosynthesis via de novo pathway; orotate from (S)-dihydroorotate (quinone route): step 1/1. Functionally, catalyzes the conversion of dihydroorotate to orotate with quinone as electron acceptor. The protein is Dihydroorotate dehydrogenase (quinone) of Shewanella woodyi (strain ATCC 51908 / MS32).